We begin with the raw amino-acid sequence, 161 residues long: Peroxynitrite isomerase 1 (161 aa).

The short motif at 17-23 (GTWTGRG) is the GXWXGXG element. Position 152 (histidine 152) interacts with heme b.

It belongs to the nitrobindin family. Homodimer. The cofactor is heme b.

It catalyses the reaction peroxynitrite = nitrate. Its pathway is nitrogen metabolism. Its function is as follows. Heme-binding protein able to scavenge peroxynitrite and to protect free L-tyrosine against peroxynitrite-mediated nitration, by acting as a peroxynitrite isomerase that converts peroxynitrite to nitrate. Therefore, this protein likely plays a role in peroxynitrite sensing and in the detoxification of reactive nitrogen and oxygen species (RNS and ROS, respectively). Is able to bind nitric oxide (NO) in vitro, but may act as a sensor of peroxynitrite levels in vivo. The polypeptide is Peroxynitrite isomerase 1 (Mycolicibacterium paratuberculosis (strain ATCC BAA-968 / K-10) (Mycobacterium paratuberculosis)).